Consider the following 154-residue polypeptide: 6,7-dimethyl-8-ribityllumazine synthase (154 aa).

Residues Phe-22, 56–58, and 80–82 each bind 5-amino-6-(D-ribitylamino)uracil; these read AFE and TVI. 85–86 lines the (2S)-2-hydroxy-3-oxobutyl phosphate pocket; the sequence is AT. His-88 acts as the Proton donor in catalysis. Phe-113 contributes to the 5-amino-6-(D-ribitylamino)uracil binding site. Position 127 (Arg-127) interacts with (2S)-2-hydroxy-3-oxobutyl phosphate.

Belongs to the DMRL synthase family. Forms an icosahedral capsid composed of 60 subunits, arranged as a dodecamer of pentamers.

The enzyme catalyses (2S)-2-hydroxy-3-oxobutyl phosphate + 5-amino-6-(D-ribitylamino)uracil = 6,7-dimethyl-8-(1-D-ribityl)lumazine + phosphate + 2 H2O + H(+). The protein operates within cofactor biosynthesis; riboflavin biosynthesis; riboflavin from 2-hydroxy-3-oxobutyl phosphate and 5-amino-6-(D-ribitylamino)uracil: step 1/2. In terms of biological role, catalyzes the formation of 6,7-dimethyl-8-ribityllumazine by condensation of 5-amino-6-(D-ribitylamino)uracil with 3,4-dihydroxy-2-butanone 4-phosphate. This is the penultimate step in the biosynthesis of riboflavin. The polypeptide is 6,7-dimethyl-8-ribityllumazine synthase (Bacillus licheniformis (strain ATCC 14580 / DSM 13 / JCM 2505 / CCUG 7422 / NBRC 12200 / NCIMB 9375 / NCTC 10341 / NRRL NRS-1264 / Gibson 46)).